Reading from the N-terminus, the 451-residue chain is AP-3 complex subunit mu (451 aa).

The MHD domain maps to 191–450; sequence NNEIYVDLVE…TSRAGDYIVR (260 aa).

Belongs to the adaptor complexes medium subunit family. In terms of assembly, adaptor protein complex 3 (AP-3) is a heterotetramer composed of 2 large adaptins (APL5 and APL6), a medium adaptin (APM3) and a small adaptin (APS3).

Its subcellular location is the golgi apparatus. The protein localises to the cytoplasmic vesicle membrane. Part of the AP-3 complex, an adaptor-related complex which is not clathrin-associated. The complex is associated with the Golgi region as well as more peripheral structures. It facilitates the budding of vesicles from the Golgi membrane and may be directly involved in trafficking to the vacuole. This chain is AP-3 complex subunit mu (APM3), found in Eremothecium gossypii (strain ATCC 10895 / CBS 109.51 / FGSC 9923 / NRRL Y-1056) (Yeast).